The primary structure comprises 216 residues: UPF0301 protein Nham_3550 (216 aa).

The segment covering 1-10 (MSAARKRPGT) has biased composition (basic residues). Residues 1–25 (MSAARKRPGTGRRQTDDADTGAPDQ) form a disordered region.

It belongs to the UPF0301 (AlgH) family.

The sequence is that of UPF0301 protein Nham_3550 from Nitrobacter hamburgensis (strain DSM 10229 / NCIMB 13809 / X14).